We begin with the raw amino-acid sequence, 345 residues long: Ketol-acid reductoisomerase (NADP(+)) (345 aa).

One can recognise a KARI N-terminal Rossmann domain in the interval 2 to 182 (AKVYHDSSAD…GTTRAGVLET (181 aa)). NADP(+)-binding positions include 25–28 (YGSQ), R48, S51, S53, and 83–86 (DTEQ). H108 is a catalytic residue. Residue G134 participates in NADP(+) binding. Residues 183–328 (TFKEETETDL…AQLRDMMTFL (146 aa)) form the KARI C-terminal knotted domain. Residues D191, E195, E227, and E231 each contribute to the Mg(2+) site. Residue S252 participates in substrate binding.

The protein belongs to the ketol-acid reductoisomerase family. The cofactor is Mg(2+).

The catalysed reaction is (2R)-2,3-dihydroxy-3-methylbutanoate + NADP(+) = (2S)-2-acetolactate + NADPH + H(+). It carries out the reaction (2R,3R)-2,3-dihydroxy-3-methylpentanoate + NADP(+) = (S)-2-ethyl-2-hydroxy-3-oxobutanoate + NADPH + H(+). It participates in amino-acid biosynthesis; L-isoleucine biosynthesis; L-isoleucine from 2-oxobutanoate: step 2/4. It functions in the pathway amino-acid biosynthesis; L-valine biosynthesis; L-valine from pyruvate: step 2/4. In terms of biological role, involved in the biosynthesis of branched-chain amino acids (BCAA). Catalyzes an alkyl-migration followed by a ketol-acid reduction of (S)-2-acetolactate (S2AL) to yield (R)-2,3-dihydroxy-isovalerate. In the isomerase reaction, S2AL is rearranged via a Mg-dependent methyl migration to produce 3-hydroxy-3-methyl-2-ketobutyrate (HMKB). In the reductase reaction, this 2-ketoacid undergoes a metal-dependent reduction by NADPH to yield (R)-2,3-dihydroxy-isovalerate. In Koribacter versatilis (strain Ellin345), this protein is Ketol-acid reductoisomerase (NADP(+)).